The sequence spans 359 residues: Phospho-N-acetylmuramoyl-pentapeptide-transferase (359 aa).

10 consecutive transmembrane segments (helical) span residues 3–23, 53–73, 84–104, 117–137, 156–176, 187–207, 231–251, 255–275, 283–303, and 330–350; these read QILF…PVLI, GGVA…LIGI, GLLV…DDFI, TAKL…ALQF, IATV…LVSA, LDGL…IITF, LALI…WNAA, IFMG…LSIT, VVIG…VAVF, and VIIR…ALFY.

Belongs to the glycosyltransferase 4 family. MraY subfamily. The cofactor is Mg(2+).

Its subcellular location is the cell membrane. It carries out the reaction UDP-N-acetyl-alpha-D-muramoyl-L-alanyl-gamma-D-glutamyl-meso-2,6-diaminopimeloyl-D-alanyl-D-alanine + di-trans,octa-cis-undecaprenyl phosphate = di-trans,octa-cis-undecaprenyl diphospho-N-acetyl-alpha-D-muramoyl-L-alanyl-D-glutamyl-meso-2,6-diaminopimeloyl-D-alanyl-D-alanine + UMP. The protein operates within cell wall biogenesis; peptidoglycan biosynthesis. Catalyzes the initial step of the lipid cycle reactions in the biosynthesis of the cell wall peptidoglycan: transfers peptidoglycan precursor phospho-MurNAc-pentapeptide from UDP-MurNAc-pentapeptide onto the lipid carrier undecaprenyl phosphate, yielding undecaprenyl-pyrophosphoryl-MurNAc-pentapeptide, known as lipid I. The polypeptide is Phospho-N-acetylmuramoyl-pentapeptide-transferase (Rhodococcus opacus (strain B4)).